A 428-amino-acid chain; its full sequence is MNAKVLEKKFIVPFVLITSLFALWGFANDITNPMVAVFQTVMEIPASEAALVQLAFYGGYGTMAIPAALFASRYSYKAGILLGLALYAIGAFLFWPAAQYEIFNFFLVSLYILTFGLAFLETTANPYILAMGDPQTATRRLNFAQSFNPLGSITGMFVASQLVLTNLESDKRDAAGNLIFHTLSEAEKMSIRTHDLAEIRDPYIALGFVVVAVFIIIGLKKMPAVKIEEAGQISFKTAVSRLAQKAKYREGVIAQAFYVGVQIMCWTFIVQYAERLGFTKAEGQNFNIIAMAIFISSRFISTALMKYLKAEFMLMLFAIGGFLSILGVIFIDGVWGLYCLILTSGFMPLMFPTIYGIALYGLKEESTLGAAGLVMAIVGGALMPPLQGMIIDQGEVMGLPAVNFSFILPLICFVVIAIYGFRAWKILK.

12 helical membrane-spanning segments follow: residues 10 to 30 (FIVPFVLITSLFALWGFANDI), 51 to 71 (LVQLAFYGGYGTMAIPAALFA), 78 to 98 (AGILLGLALYAIGAFLFWPAA), 100 to 120 (YEIFNFFLVSLYILTFGLAFL), 147 to 167 (FNPLGSITGMFVASQLVLTNL), 204 to 224 (IALGFVVVAVFIIIGLKKMPA), 250 to 270 (EGVIAQAFYVGVQIMCWTFIV), 288 to 308 (IIAMAIFISSRFISTALMKYL), 311 to 331 (EFMLMLFAIGGFLSILGVIFI), 339 to 359 (CLILTSGFMPLMFPTIYGIAL), 371 to 391 (AGLVMAIVGGALMPPLQGMII), and 401 to 421 (AVNFSFILPLICFVVIAIYGF).

It belongs to the major facilitator superfamily. FHS transporter (TC 2.A.1.7) family.

It localises to the cell inner membrane. It catalyses the reaction L-fucose(in) + H(+)(in) = L-fucose(out) + H(+)(out). Mediates the uptake of L-fucose across the boundary membrane with the concomitant transport of protons into the cell (symport system). This is L-fucose-proton symporter (fucP) from Haemophilus influenzae (strain ATCC 51907 / DSM 11121 / KW20 / Rd).